The sequence spans 114 residues: Protein ELF4-LIKE 4 (114 aa).

The disordered stretch occupies residues 87–114; sequence SVDASSEGESSGTLKSDGKANQKRFRSG. Polar residues predominate over residues 89 to 100; the sequence is DASSEGESSGTL.

Belongs to the EARLY FLOWERING 4 family. Homodimer.

Its subcellular location is the nucleus. Functionally, component of the central CCA1/LHY-TOC1 feedback loop in the circadian clock that promotes clock accuracy and is required for sustained rhythms in the absence of daily light/dark cycles. The polypeptide is Protein ELF4-LIKE 4 (EFL4) (Arabidopsis thaliana (Mouse-ear cress)).